The following is a 320-amino-acid chain: Bifunctional protein FolD 2 (320 aa).

NADP(+) contacts are provided by residues 173 to 175 (GRS) and Ile-242.

This sequence belongs to the tetrahydrofolate dehydrogenase/cyclohydrolase family. As to quaternary structure, homodimer.

It catalyses the reaction (6R)-5,10-methylene-5,6,7,8-tetrahydrofolate + NADP(+) = (6R)-5,10-methenyltetrahydrofolate + NADPH. The enzyme catalyses (6R)-5,10-methenyltetrahydrofolate + H2O = (6R)-10-formyltetrahydrofolate + H(+). Its pathway is one-carbon metabolism; tetrahydrofolate interconversion. Its function is as follows. Catalyzes the oxidation of 5,10-methylenetetrahydrofolate to 5,10-methenyltetrahydrofolate and then the hydrolysis of 5,10-methenyltetrahydrofolate to 10-formyltetrahydrofolate. In Rubrobacter xylanophilus (strain DSM 9941 / JCM 11954 / NBRC 16129 / PRD-1), this protein is Bifunctional protein FolD 2.